A 528-amino-acid chain; its full sequence is Vacuolar fusion protein MON1 homolog (528 aa).

Residues 1–16 (MEVEQTSVRSDTNSTC) are compositionally biased toward polar residues. The tract at residues 1-50 (MEVEQTSVRSDTNSTCEYLDAEGDPESPNLYQEADPDQEAEQQNHSIISE) is disordered.

It belongs to the MON1/SAND family. In terms of assembly, component of the Mon1-Ccz1 guanyl-nucleotide exchange factor complex made up of Mon1, Ccz1 and Bulli; the interaction of Bulli with the Mon1-Ccz1 heterodimer is mediated via the C-terminal Mic1 domain of Bulli. Mon1 and Ccz1 form a stable complex which displays Rab7 GEF activity with or without Bulli; GEF activity is enhanced by Bulli possibly by improving membrane association of the complex. Interacts with Rab5 and Rab7; preferentially binds GTP-bound Rab5 and GDP-bound Rab7.

The protein localises to the cytoplasm. It localises to the cytosol. The Rab7 guanyl-nucleotide exchange factor (GEF) activity of the Mon1-Ccz1 complex is autoinhibited by the N-terminal disordered region of Mon1. GEF activity is stimulated by Rab5-mediated recruitment to membranes. Its function is as follows. Part of the Mon1-Ccz1 guanyl-nucleotide exchange factor complex specific for Rab7 that promotes the exchange of GDP to GTP, converting Rab7 from an inactive GDP-bound form into an active GTP-bound form. Plays an important role in membrane trafficking through the secretory apparatus. Required for recruitment of Rab7 to endosomal and autophagosomal membranes to mediate endolysosomal and autolysosomal vesicle maturation. Required for fusion of multivesicular bodies and lysosomes but not their formation or trafficking. Involved in the replacement of Rab5 (and possibly Rab4) with Rab7, also known as Rab conversion or the Rab cascade, during endosomal maturation. The Mon1-Ccz1 complex is recruited to phosphatidylinositol 3-phosphate (PtdIns[3]P) enriched membranes by Rab5, which stimulates recruitment and guanyl-nucleotide exchange of Rab7. Together with Rab7 required for autolysosome formation in fat cells and autophagic degradation during starvation-induced basal and developmental autophagy. Involved in neuromuscular junction (NMJ) presynaptic bouton function and morphogenesis. Together with Rab7, regulates levels of postsynaptic glutamate receptor GluRIIA in the NMJ presynapse. The chain is Vacuolar fusion protein MON1 homolog from Drosophila melanogaster (Fruit fly).